The primary structure comprises 367 residues: Ferrochelatase (367 aa).

Fe cation-binding residues include His213 and Glu294.

It belongs to the ferrochelatase family.

It localises to the cytoplasm. It carries out the reaction heme b + 2 H(+) = protoporphyrin IX + Fe(2+). It functions in the pathway porphyrin-containing compound metabolism; protoheme biosynthesis; protoheme from protoporphyrin-IX: step 1/1. Its function is as follows. Catalyzes the ferrous insertion into protoporphyrin IX. This is Ferrochelatase from Polaromonas sp. (strain JS666 / ATCC BAA-500).